A 580-amino-acid polypeptide reads, in one-letter code: uncharacterized protein (580 aa).

5 disordered regions span residues 161–241 (SFSP…SVND), 256–281 (LGSL…SFSD), 325–345 (NVSH…QLLK), 472–495 (PRDT…DNSD), and 544–564 (SAVL…KEVR). The span at 192-203 (SNSNSSDTSTDD) shows a compositional bias: low complexity. Composition is skewed to polar residues over residues 223-241 (THSS…SVND) and 256-269 (LGSL…TAQK). The span at 326–341 (VSHEEKSHSVQDDKSK) shows a compositional bias: basic and acidic residues. Positions 481–495 (PNLSQSGNINSDNSD) are enriched in polar residues.

This is an uncharacterized protein from Schizosaccharomyces pombe (strain 972 / ATCC 24843) (Fission yeast).